Reading from the N-terminus, the 482-residue chain is Glutamate synthase [NADPH] small chain (482 aa).

One can recognise a 4Fe-4S ferredoxin-type domain in the interval 39–72; that stretch reads ERANEQANRCSQCGVPFCQVHCPVSNNIPDWLKL. [4Fe-4S] cluster-binding residues include Cys-95, Cys-99, Cys-105, and Cys-109.

In terms of assembly, aggregate of 4 catalytic active heterodimers, consisting of a large and a small subunit. It depends on [4Fe-4S] cluster as a cofactor.

It catalyses the reaction 2 L-glutamate + NADP(+) = L-glutamine + 2-oxoglutarate + NADPH + H(+). Its pathway is amino-acid biosynthesis; L-glutamate biosynthesis via GLT pathway; L-glutamate from 2-oxoglutarate and L-glutamine (NADP(+) route): step 1/1. It functions in the pathway energy metabolism; nitrogen metabolism. The chain is Glutamate synthase [NADPH] small chain (gltD) from Azospirillum brasilense.